Reading from the N-terminus, the 236-residue chain is Protein CUSTOS (236 aa).

Disordered regions lie at residues M1 to P57 and V83 to E236. Composition is skewed to basic and acidic residues over residues N10–N51 and E156–E165. Residues K173–K181 carry the Nucleolar localization signal (NLS1) motif. A compositionally biased stretch (basic and acidic residues) spans T182–E196. The span at K197–A210 shows a compositional bias: polar residues. The short motif at G211–K219 is the Nucleolar localization signal (NLS2) element. A compositionally biased stretch (basic residues) spans L214–K227.

Belongs to the CUSTOS family. Interacts (via NLS1 and NLS2) with dvl2; the interaction is negatively regulated by Wnt stimulation. Interacts with csnk1a1. Interacts with ctnnb1; the interaction is positively regulated by Wnt stimulation. Post-translationally, phosphorylated by ck1/csnk1a1.

It is found in the nucleus envelope. Its function is as follows. Essential for Spemann-Mangold organizer formation and subsequent anterior head development in the embryo. Inhibits canonical Wnt signaling pathway by antagonizing nuclear import of beta-catenin (ctnnb1) during embryogenesis. The protein is Protein CUSTOS of Danio rerio (Zebrafish).